Reading from the N-terminus, the 311-residue chain is Malate dehydrogenase (311 aa).

Residues glycine 7 to glycine 13 and aspartate 34 contribute to the NAD(+) site. Substrate-binding residues include arginine 81 and arginine 87. NAD(+) contacts are provided by residues asparagine 94 and isoleucine 117 to asparagine 119. Positions 119 and 153 each coordinate substrate. Histidine 177 functions as the Proton acceptor in the catalytic mechanism. Methionine 227 provides a ligand contact to NAD(+).

It belongs to the LDH/MDH superfamily. MDH type 1 family. In terms of assembly, homodimer.

It catalyses the reaction (S)-malate + NAD(+) = oxaloacetate + NADH + H(+). Functionally, catalyzes the reversible oxidation of malate to oxaloacetate. The polypeptide is Malate dehydrogenase (Aeromonas salmonicida (strain A449)).